The chain runs to 243 residues: Small ribosomal subunit protein uS3 (243 aa).

Residues 38–106 (IRKYLNARLA…DIQINIFEVK (69 aa)) form the KH type-2 domain. Residues 214–243 (PNFTQSKESGRGNNGGNNGGKNFKRKKNNR) are disordered.

It belongs to the universal ribosomal protein uS3 family. Part of the 30S ribosomal subunit. Forms a tight complex with proteins S10 and S14.

In terms of biological role, binds the lower part of the 30S subunit head. Binds mRNA in the 70S ribosome, positioning it for translation. The sequence is that of Small ribosomal subunit protein uS3 from Bacteroides thetaiotaomicron (strain ATCC 29148 / DSM 2079 / JCM 5827 / CCUG 10774 / NCTC 10582 / VPI-5482 / E50).